Consider the following 297-residue polypeptide: L-ribulose 3-epimerase (297 aa).

E147 (proton donor/acceptor) is an active-site residue. E147 is a Mn(2+) binding site. Substrate-binding positions include E153 and 180–183 (DTFH). Positions 180 and 206 each coordinate Mn(2+). R212 is a binding site for substrate. The active-site Proton donor/acceptor is E241. E241 is a binding site for Mn(2+).

This sequence belongs to the hyi family. As to quaternary structure, homotetramer. Mn(2+) serves as cofactor.

It catalyses the reaction L-ribulose = L-xylulose. The enzyme catalyses keto-D-tagatose = keto-D-sorbose. The catalysed reaction is D-allulose = keto-D-fructose. Strongly inhibited by Co(2+) and Ni(2+), and slightly inhibited by EDTA. In terms of biological role, catalyzes the epimerization of various ketoses at the C(3) position. It is able to interconvert L-ribulose with high efficiency. The enzyme can also accept other ketopentoses such as D-psicose and D-tagatose with lower efficiency. The sequence is that of L-ribulose 3-epimerase from Mesorhizobium japonicum (strain LMG 29417 / CECT 9101 / MAFF 303099) (Mesorhizobium loti (strain MAFF 303099)).